A 212-amino-acid polypeptide reads, in one-letter code: Adenylate kinase (212 aa).

10–15 (GAGKGT) lines the ATP pocket. Residues 30–59 (STGDMFRAAMVNQTEMGVLAKSYIDKGELV) form an NMP region. Residues Thr31, Arg36, 57 to 59 (ELV), 86 to 89 (GYPR), and Gln93 each bind AMP. The tract at residues 127–159 (GRIIHRVTGETFHKVFNPPVDYKEEDYYQREDD) is LID. ATP-binding positions include Arg128 and 137 to 138 (TF). AMP contacts are provided by Arg156 and Arg167. ATP is bound at residue Gln195.

The protein belongs to the adenylate kinase family. Monomer.

It is found in the cytoplasm. The enzyme catalyses AMP + ATP = 2 ADP. It participates in purine metabolism; AMP biosynthesis via salvage pathway; AMP from ADP: step 1/1. Catalyzes the reversible transfer of the terminal phosphate group between ATP and AMP. Plays an important role in cellular energy homeostasis and in adenine nucleotide metabolism. The sequence is that of Adenylate kinase from Streptococcus pneumoniae (strain 70585).